A 322-amino-acid polypeptide reads, in one-letter code: MKTSRRGRALLAVALNLLALLFATTAFLTTYWCQGTQRVPKPGCGQGGGANCPNSGANATANSTAAPVAASPAGAPYSWEAGDERFQLRRFHTGIWYSCEEELGGPGEKCRSFIDLAPASEKGVLWLSVVSEVLYILLLVVGFSLMCLELLHSSSVIDGLKLNAFAAVFTVLSGLLGMVAHMMYTQVFQVTVSLGPEDWRPHSWDYGWSFCLAWGSFTCCMAASVTTLNSYTKTVIEFRHKRKVFEQGYREEPTFIDPEAIKYFRERIEKGDVSEEEDFRLACRHERYPTRHQPHMGDSWPRSSAHEAAELNRQCWVLGHWV.

Over 1 to 8 the chain is Cytoplasmic; the sequence is MKTSRRGR. Residues 9 to 29 traverse the membrane as a helical segment; it reads ALLAVALNLLALLFATTAFLT. The Extracellular portion of the chain corresponds to 30-122; that stretch reads TYWCQGTQRV…FIDLAPASEK (93 aa). Residues 123–143 form a helical membrane-spanning segment; that stretch reads GVLWLSVVSEVLYILLLVVGF. The Cytoplasmic segment spans residues 144-163; that stretch reads SLMCLELLHSSSVIDGLKLN. A helical membrane pass occupies residues 164-184; it reads AFAAVFTVLSGLLGMVAHMMY. Residues 185–207 are Extracellular-facing; sequence TQVFQVTVSLGPEDWRPHSWDYG. Residues 208 to 228 traverse the membrane as a helical segment; it reads WSFCLAWGSFTCCMAASVTTL. Topologically, residues 229 to 322 are cytoplasmic; the sequence is NSYTKTVIEF…RQCWVLGHWV (94 aa). A Phosphoserine modification is found at S274.

Belongs to the GSG1 family. As to quaternary structure, component of the inner core of AMPAR complexes. AMPAR complexes consist of an inner core made of 4 pore-forming GluA/GRIA proteins (GRIA1, GRIA2, GRIA3 and GRIA4) and 4 major auxiliary subunits arranged in a twofold symmetry. One of the two pairs of distinct binding sites is occupied either by CNIH2, CNIH3 or CACNG2, CACNG3. The other harbors CACNG2, CACNG3, CACNG4, CACNG8 or GSG1L. This inner core of AMPAR complexes is complemented by outer core constituents binding directly to the GluA/GRIA proteins at sites distinct from the interaction sites of the inner core constituents. Outer core constituents include at least PRRT1, PRRT2, CKAMP44/SHISA9, FRRS1L and NRN1. The proteins of the inner and outer core serve as a platform for other, more peripherally associated AMPAR constituents. Alone or in combination, these auxiliary subunits control the gating and pharmacology of the AMPAR complexes and profoundly impact their biogenesis and protein processing. In terms of tissue distribution, expressed in the brain (at protein level).

It localises to the cell membrane. The protein resides in the synapse. Functionally, as a component of the inner core of AMPAR complexes, modifies AMPA receptor (AMPAR) gating. The sequence is that of Germ cell-specific gene 1-like protein (Gsg1l) from Rattus norvegicus (Rat).